Here is a 213-residue protein sequence, read N- to C-terminus: MPSLTAFFGGTFDPIHYGHLQPVTALAKLVGLTQVVLMPNNVPPHRQQPEASSRQRFHMAELAVEGNPLFTVDDRELQRQTPSYTIDTLEALRAEKGHDAPLGFIIGQDSLLTLHHWHRWQDLLGVCHLLVCARPGYRSTLETPELQQWLDDHLTHAPEDLHQQPHGRIFLADTPLVTISATDIRQRRQQGLDCHDLLPPVVLRYINEHGLYQ.

It belongs to the NadD family.

The enzyme catalyses nicotinate beta-D-ribonucleotide + ATP + H(+) = deamido-NAD(+) + diphosphate. The protein operates within cofactor biosynthesis; NAD(+) biosynthesis; deamido-NAD(+) from nicotinate D-ribonucleotide: step 1/1. Its function is as follows. Catalyzes the reversible adenylation of nicotinate mononucleotide (NaMN) to nicotinic acid adenine dinucleotide (NaAD). This Pectobacterium atrosepticum (strain SCRI 1043 / ATCC BAA-672) (Erwinia carotovora subsp. atroseptica) protein is Probable nicotinate-nucleotide adenylyltransferase.